We begin with the raw amino-acid sequence, 218 residues long: Trimethylamine corrinoid protein 2 (218 aa).

One can recognise a B12-binding N-terminal domain in the interval 1-92 (MAGKEEIIAK…EMEKRKSQTK (92 aa)). A B12-binding domain is found at 94 to 218 (LGTVIIGTIE…AKVKAALKVG (125 aa)). Residue H107 participates in methylcob(III)alamin binding.

The protein belongs to the methylamine corrinoid protein family. As to quaternary structure, can form a complex with MttB.

Its pathway is one-carbon metabolism; methanogenesis from trimethylamine. Its function is as follows. Acts probably as a methyl group carrier between MttB and either MtbA or MtaA. This chain is Trimethylamine corrinoid protein 2 (mttC2), found in Methanosarcina mazei (strain ATCC BAA-159 / DSM 3647 / Goe1 / Go1 / JCM 11833 / OCM 88) (Methanosarcina frisia).